Consider the following 114-residue polypeptide: Probable divalent-cation tolerance protein cutA homolog (114 aa).

It belongs to the CutA family. Homotrimer.

In Encephalitozoon cuniculi (strain GB-M1) (Microsporidian parasite), this protein is Probable divalent-cation tolerance protein cutA homolog.